The chain runs to 421 residues: Hydrolyase poxO (421 aa).

Ser239 (nucleophile) is an active-site residue.

The protein belongs to the AB hydrolase superfamily. FUS2 hydrolase family. In terms of assembly, homodimer.

The protein operates within secondary metabolite biosynthesis. Its function is as follows. Hydrolyase; part of the gene cluster that mediates the biosynthesis of oxaleimides, cytotoxic compounds containing an unusual disubstituted succinimide moiety. The first step of the pathway is provided by the HR-PKS poxF that serves in a new mode of collaborative biosynthesis with the PKS-NRPS poxE, by providing the olefin containing amino acid substrate via the synthesis of an ACP-bound dec-4-enoate. The cytochrome P450 monooxygenase poxM-catalyzed oxidation at the alpha-position creates the enzyme-bound 2-hydroxydec-4-enoyl-ACP thioester, which may be prone to spontaneous hydrolysis to yield 2-hydroxydec-4-enoic acid due to increased electrophilicity of the carbonyl. 2-hydroxydec-4-enoic acid can then be further oxidized by poxM to yield the alpha-ketoacid 2-oxodec-4-enoicacid, which is reductively aminated by the aminotransferase poxL to yield (S,E)-2-aminodec-4-enoic acid. The Hybrid PKS-NRPS synthetase poxE then performs condensation between the octaketide product of its PKS modules and the amino group of (S,E)-2-aminodec-4-enoic acid which is activated and incorporated by the adenylation domain. The resulting aminoacyl product can be cyclized by the Diels-Alderase PoxQ and reductively released by the reductive (R) domain of poxE to yield an aldehyde intermediate. The released aldehyde is then substrate for a Knoevenagel condensation by the hydrolyase poxO followed by an oxidation at the 5-position of the pyrrolidone ring. The presence of the olefin from the amino acid building block allows for migration of the substituted allyl group to occur. This allylic transposition reaction takes place in a conjugate addition, semipinacol-like fashion to yield a succinimide intermediate. Iterative two-electron oxidations of the C7 methyl of the succinimide intermediate to the carboxylic acid can be catalyzed by one of two remaining cytochrome P450 monooxygenasess poxC or poxD to yield oxaleimide A. Subsequent oxidation yields the maleimide scaffold oxaleimide I. Both oxaleimide A and oxaleimide I can undergo oxidative modifications in the decalin ring to yield the series of products oxaleimides B to H. The polypeptide is Hydrolyase poxO (Penicillium oxalicum).